The following is a 347-amino-acid chain: MSEKFLYALARPFLFAIDPEAAHNLTLHALRRAASLGWTSAIAKPAHDPRTVMGITFPNPVGLAAGLDKDGAYIDGLATLGFGFIEVGTVTPHAQPGNPLPRMFRLPQANAIINRMGFNNGGVDAFVSNVQASRFYQNKEGILGLNIGKNADTPIERAVDDYLICLEKVYPYASYVTVNISSPNTKNLRQLQGASELDALLAQLKEAQQRLADQHQRYVPIALKIAPDIDTEQIQTIAQALLRHKMDGVIATNTTINREAVKNMKHAEEAGGLSGAPVFASSNAVIRALKAELGDALPIIGVGGILSGTDAQAKIAAGASLVQLYTGLIYRGPALIRECAAALRAPT.

Residues 65-69 and T89 each bind FMN; that span reads AGLDK. K69 is a binding site for substrate. 114 to 118 contributes to the substrate binding site; that stretch reads NRMGF. FMN-binding residues include N146 and N179. Residue N179 coordinates substrate. Residue S182 is the Nucleophile of the active site. N184 is a substrate binding site. FMN-binding residues include K224 and T252. Substrate is bound at residue 253–254; it reads NT. FMN-binding positions include G275, G304, and 325–326; that span reads YT.

The protein belongs to the dihydroorotate dehydrogenase family. Type 2 subfamily. Monomer. It depends on FMN as a cofactor.

It localises to the cell membrane. It carries out the reaction (S)-dihydroorotate + a quinone = orotate + a quinol. It functions in the pathway pyrimidine metabolism; UMP biosynthesis via de novo pathway; orotate from (S)-dihydroorotate (quinone route): step 1/1. In terms of biological role, catalyzes the conversion of dihydroorotate to orotate with quinone as electron acceptor. This Herminiimonas arsenicoxydans protein is Dihydroorotate dehydrogenase (quinone).